The chain runs to 391 residues: Transaldolase (391 aa).

The Schiff-base intermediate with substrate role is filled by K134. EF-hand domains are found at residues 329–364 (TLTH…FDAL) and 365–387 (DANH…VLHL). Positions 342, 344, 346, 353, 365, 367, 369, 371, and 376 each coordinate Ca(2+).

The protein belongs to the transaldolase family. Type 1 subfamily.

The protein resides in the cytoplasm. The enzyme catalyses D-sedoheptulose 7-phosphate + D-glyceraldehyde 3-phosphate = D-erythrose 4-phosphate + beta-D-fructose 6-phosphate. It participates in carbohydrate degradation; pentose phosphate pathway; D-glyceraldehyde 3-phosphate and beta-D-fructose 6-phosphate from D-ribose 5-phosphate and D-xylulose 5-phosphate (non-oxidative stage): step 2/3. Its function is as follows. Transaldolase is important for the balance of metabolites in the pentose-phosphate pathway. The chain is Transaldolase from Thermosynechococcus vestitus (strain NIES-2133 / IAM M-273 / BP-1).